The following is a 93-amino-acid chain: UPF0358 protein RBAM_014700 (93 aa).

The protein belongs to the UPF0358 family.

The sequence is that of UPF0358 protein RBAM_014700 from Bacillus velezensis (strain DSM 23117 / BGSC 10A6 / LMG 26770 / FZB42) (Bacillus amyloliquefaciens subsp. plantarum).